We begin with the raw amino-acid sequence, 429 residues long: Protein FAM98B (429 aa).

Residues 304-429 form a disordered region; it reads RVPDRGGRPN…GGGGGGYRRY (126 aa). A compositionally biased stretch (basic and acidic residues) spans 305-314; it reads VPDRGGRPNE. Gly residues predominate over residues 332 to 429; that stretch reads GGRGGWGGGG…GGGGGGYRRY (98 aa).

Belongs to the FAM98 family. In terms of assembly, homodimer. Component of a tRNA-splicing ligase complex. Interacts with FAM98A.

It is found in the nucleus. Its subcellular location is the cytoplasm. In terms of biological role, positively stimulates PRMT1-induced protein arginine dimethylated arginine methylation. This chain is Protein FAM98B (Fam98b), found in Mus musculus (Mouse).